We begin with the raw amino-acid sequence, 372 residues long: Cytochrome b (372 aa).

The next 4 helical transmembrane spans lie at 25–45, 69–90, 105–125, and 170–190; these read FGSM…FLAI, WIMQ…YIHI, WLSG…GYVL, and FFAL…IHII. Positions 75 and 89 each coordinate heme b. Positions 174 and 188 each coordinate heme b. Position 193 (H193) interacts with a ubiquinone. The next 4 helical transmembrane spans lie at 218–238, 280–300, 312–332, and 339–358; these read YKDM…LSFL, LGGT…PFTH, LSQT…WTAT, and FITI…IMTP.

This sequence belongs to the cytochrome b family. The cytochrome bc1 complex contains 3 respiratory subunits (MT-CYB, CYC1 and UQCRFS1), 2 core proteins (UQCRC1 and UQCRC2) and probably 6 low-molecular weight proteins. Requires heme b as cofactor.

Its subcellular location is the mitochondrion inner membrane. In terms of biological role, component of the ubiquinol-cytochrome c reductase complex (complex III or cytochrome b-c1 complex) that is part of the mitochondrial respiratory chain. The b-c1 complex mediates electron transfer from ubiquinol to cytochrome c. Contributes to the generation of a proton gradient across the mitochondrial membrane that is then used for ATP synthesis. In Aspidelaps scutatus (Shield-nose snake), this protein is Cytochrome b (MT-CYB).